We begin with the raw amino-acid sequence, 277 residues long: Tumor necrosis factor receptor superfamily member 4 (277 aa).

A signal peptide spans 1–28 (MCVGARRLGRGPCAALLLLGLGLSTVTG). The Extracellular portion of the chain corresponds to 29 to 214 (LHCVGDTYPS…RPVEVPGGRA (186 aa)). TNFR-Cys repeat units follow at residues 30-65 (HCVG…TVCR) and 66-107 (PCGP…DTVC). 8 cysteine pairs are disulfide-bonded: cysteine 31–cysteine 42, cysteine 43–cysteine 56, cysteine 46–cysteine 64, cysteine 67–cysteine 81, cysteine 84–cysteine 99, cysteine 87–cysteine 107, cysteine 109–cysteine 125, and cysteine 128–cysteine 141. The TNFR-Cys 3; truncated repeat unit spans residues 108 to 126 (RCRAGTQPLDSYKPGVDCA). The stretch at 127 to 167 (PCPPGHFSPGDNQACKPWTNCTLAGKHTLQPASNSSDAICE) is one TNFR-Cys 4 repeat. 2 N-linked (GlcNAc...) asparagine glycosylation sites follow: asparagine 146 and asparagine 160. The cysteines at positions 147 and 166 are disulfide-linked. Positions 158-209 (ASNSSDAICEDRDPPATQPQETQGPPARPITVQPTEAWPRTSQGPSTRPVEV) are disordered. Residues 215–235 (VAAILGLGLVLGLLGPLAILL) traverse the membrane as a helical segment. Topologically, residues 236–277 (ALYLLRRDQRLPPDAHKPPGGGSFRTPIQEEQADAHSTLAKI) are cytoplasmic. Positions 248 to 277 (PDAHKPPGGGSFRTPIQEEQADAHSTLAKI) are disordered.

Interacts with TRAF2, TRAF3 and TRAF5. In terms of assembly, (Microbial infection) Interacts with Human herpesvirus 6B/HHV-6B gQ1:gQ2 proteins.

It localises to the membrane. Functionally, receptor for TNFSF4/OX40L/GP34. Is a costimulatory molecule implicated in long-term T-cell immunity. (Microbial infection) Acts as a receptor for human herpesvirus 6B/HHV-6B. The protein is Tumor necrosis factor receptor superfamily member 4 (TNFRSF4) of Homo sapiens (Human).